The chain runs to 664 residues: NADH-ubiquinone oxidoreductase chain 5 (664 aa).

17 consecutive transmembrane segments (helical) span residues 2-22 (LLLT…LFGF), 28-48 (GSVF…LIII), 77-97 (FLFD…STLV), 120-140 (LFTF…MFVG), 168-188 (AMLV…TIFY), 210-230 (FIFF…IFIG), 250-270 (GPTP…GVYL), 285-305 (LKII…VGLV), 321-341 (LGYM…FHLS), 342-362 (NHAY…HAMG), 376-396 (ILPF…GFPF), 424-444 (LGTI…FFAF), 462-482 (PLEM…IGYI), 521-541 (LPVI…FFKF), 590-610 (IDKG…FSFL), 614-634 (IILL…ISTI), and 639-659 (IIFF…FLFI).

It belongs to the complex I subunit 5 family.

It localises to the mitochondrion inner membrane. It carries out the reaction a ubiquinone + NADH + 5 H(+)(in) = a ubiquinol + NAD(+) + 4 H(+)(out). Its function is as follows. Core subunit of the mitochondrial membrane respiratory chain NADH dehydrogenase (Complex I) that is believed to belong to the minimal assembly required for catalysis. Complex I functions in the transfer of electrons from NADH to the respiratory chain. The immediate electron acceptor for the enzyme is believed to be ubiquinone. This Phytophthora infestans (Potato late blight agent) protein is NADH-ubiquinone oxidoreductase chain 5 (ND5).